Here is a 536-residue protein sequence, read N- to C-terminus: Phosphoenolpyruvate carboxykinase (ATP) (536 aa).

3 residues coordinate substrate: Arg61, Tyr195, and Lys201. ATP-binding positions include Lys201, His220, and 236–244; that span reads GLSGTGKTT. 2 residues coordinate Mn(2+): Lys201 and His220. Asp257 contacts Mn(2+). Residues Glu285, Arg322, and Thr447 each contribute to the ATP site. A substrate-binding site is contributed by Arg322.

The protein belongs to the phosphoenolpyruvate carboxykinase (ATP) family. Mn(2+) serves as cofactor.

Its subcellular location is the cytoplasm. The catalysed reaction is oxaloacetate + ATP = phosphoenolpyruvate + ADP + CO2. The protein operates within carbohydrate biosynthesis; gluconeogenesis. Its function is as follows. Involved in the gluconeogenesis. Catalyzes the conversion of oxaloacetate (OAA) to phosphoenolpyruvate (PEP) through direct phosphoryl transfer between the nucleoside triphosphate and OAA. This chain is Phosphoenolpyruvate carboxykinase (ATP), found in Rhizobium meliloti (strain 1021) (Ensifer meliloti).